A 332-amino-acid polypeptide reads, in one-letter code: Transaldolase (332 aa).

The active-site Schiff-base intermediate with substrate is Lys-136.

It belongs to the transaldolase family. Type 1 subfamily.

It localises to the cytoplasm. It catalyses the reaction D-sedoheptulose 7-phosphate + D-glyceraldehyde 3-phosphate = D-erythrose 4-phosphate + beta-D-fructose 6-phosphate. Its pathway is carbohydrate degradation; pentose phosphate pathway; D-glyceraldehyde 3-phosphate and beta-D-fructose 6-phosphate from D-ribose 5-phosphate and D-xylulose 5-phosphate (non-oxidative stage): step 2/3. Transaldolase is important for the balance of metabolites in the pentose-phosphate pathway. This is Transaldolase from Nostoc sp. (strain PCC 7120 / SAG 25.82 / UTEX 2576).